A 350-amino-acid chain; its full sequence is THUMP domain-containing protein 1 (350 aa).

Over residues 1–10 (MATTAQQSPQ) the composition is skewed to polar residues. 2 disordered regions span residues 1–42 (MATT…LEPG) and 75–96 (PEKFIDKDQQPSGSEGEDDDAE). The residue at position 2 (Ala2) is an N-acetylalanine. Phosphoserine occurs at positions 8, 86, 88, and 119. In terms of domain architecture, THUMP spans 147–254 (DMYKTKKKKT…KAVCCLSVVK (108 aa)). Position 270 is a phosphoserine (Ser270). Residues 270–292 (SAKDSQPHPKLGNGKEAKLEPDS) are compositionally biased toward basic and acidic residues. The disordered stretch occupies residues 270–350 (SAKDSQPHPK…VPKTNENELS (81 aa)).

It belongs to the THUMPD1 family. As to quaternary structure, interacts with NAT10. Binds tRNA.

Functions as a tRNA-binding adapter to mediate NAT10-dependent tRNA acetylation modifying cytidine to N4-acetylcytidine (ac4C). This chain is THUMP domain-containing protein 1 (Thumpd1), found in Mus musculus (Mouse).